Reading from the N-terminus, the 211-residue chain is tRNA (guanine-N(7)-)-methyltransferase (211 aa).

Positions 44, 69, 96, and 118 each coordinate S-adenosyl-L-methionine. Asp118 is a catalytic residue. Residue Lys122 coordinates substrate. Residues 124 to 129 (RHEKRR) form an interaction with RNA region. Substrate-binding positions include Asp154 and 191–194 (TEYE).

The protein belongs to the class I-like SAM-binding methyltransferase superfamily. TrmB family.

It catalyses the reaction guanosine(46) in tRNA + S-adenosyl-L-methionine = N(7)-methylguanosine(46) in tRNA + S-adenosyl-L-homocysteine. It functions in the pathway tRNA modification; N(7)-methylguanine-tRNA biosynthesis. In terms of biological role, catalyzes the formation of N(7)-methylguanine at position 46 (m7G46) in tRNA. The chain is tRNA (guanine-N(7)-)-methyltransferase from Streptococcus pneumoniae (strain Taiwan19F-14).